A 204-amino-acid polypeptide reads, in one-letter code: Elongation factor Ts (204 aa).

Positions 80–83 are involved in Mg(2+) ion dislocation from EF-Tu; sequence TDFV.

The protein belongs to the EF-Ts family.

It is found in the cytoplasm. Associates with the EF-Tu.GDP complex and induces the exchange of GDP to GTP. It remains bound to the aminoacyl-tRNA.EF-Tu.GTP complex up to the GTP hydrolysis stage on the ribosome. This Caldicellulosiruptor bescii (strain ATCC BAA-1888 / DSM 6725 / KCTC 15123 / Z-1320) (Anaerocellum thermophilum) protein is Elongation factor Ts.